A 1022-amino-acid polypeptide reads, in one-letter code: ATPase MORC2B (1022 aa).

A2 carries the post-translational modification N-acetylalanine. Residues N39, 87–89 (SAK), and 99–105 (RYGNGLK) each bind ATP. Residue N39 participates in Mg(2+) binding. Residues 285–362 (KTRAEQEVKK…RDAKQQALKE (78 aa)) adopt a coiled-coil conformation. K427 is an ATP binding site. The segment at 490 to 544 (AMQVPTTIQCDLCLKWRTLPFQLSAVEEGYPINWVCSMNPDPEQDQCEAFELKQK) adopts a CW-type zinc-finger fold. 4 residues coordinate Zn(2+): C499, C502, C525, and C536. A coiled-coil region spans residues 555–583 (KTQEERQKQLTEKIQQEQRKLKALKKIKP). Phosphoserine is present on S615. Residue K649 forms a Glycyl lysine isopeptide (Lys-Gly) (interchain with G-Cter in SUMO2) linkage. 4 positions are modified to phosphoserine: S690, S724, S733, and S737. K758 participates in a covalent cross-link: Glycyl lysine isopeptide (Lys-Gly) (interchain with G-Cter in SUMO2). Residues S768 and S770 each carry the phosphoserine modification. At T827 the chain carries Phosphothreonine. Residues S846 and S851 each carry the phosphoserine modification. A Glycyl lysine isopeptide (Lys-Gly) (interchain with G-Cter in SUMO2) cross-link involves residue K922. Residues 962-1001 (QAKVSEESLRISQKKLQETEEKLQKLRTNIQTLLQMAQQG) are a coiled coil.

As to quaternary structure, interacts with Morc2a. Protein is abundant in testes but not detected in other adult tissues examined (at protein level). Detected in germ cells with a distinct developmental-specific expression pattern but not in somatic cells such as Sertoli cells.

It is found in the nucleus. The catalysed reaction is ATP + H2O = ADP + phosphate + H(+). Required for chromosomal synapsis and meiotic recombination in males and females. The chain is ATPase MORC2B from Mus musculus (Mouse).